Consider the following 78-residue polypeptide: Short neurotoxin SNTX26 (78 aa).

Positions 1-21 (MKTLLLTFLVVTIVCLDLGYT) are cleaved as a signal peptide. 4 disulfides stabilise this stretch: cysteine 24–cysteine 40, cysteine 33–cysteine 58, cysteine 62–cysteine 70, and cysteine 71–cysteine 76.

Belongs to the three-finger toxin family. Short-chain subfamily. Expressed by the venom gland.

The protein resides in the secreted. Its function is as follows. This three-finger toxin binds and inhibits the nicotinic acetylcholine receptor (nAChR). The chain is Short neurotoxin SNTX26 from Ophiophagus hannah (King cobra).